Consider the following 202-residue polypeptide: FMN-dependent NADH:quinone oxidoreductase (202 aa).

FMN contacts are provided by residues serine 9, 15–17 (SVS), 95–98 (MYNF), and 139–142 (SRGG).

This sequence belongs to the azoreductase type 1 family. As to quaternary structure, homodimer. FMN is required as a cofactor.

It carries out the reaction 2 a quinone + NADH + H(+) = 2 a 1,4-benzosemiquinone + NAD(+). It catalyses the reaction N,N-dimethyl-1,4-phenylenediamine + anthranilate + 2 NAD(+) = 2-(4-dimethylaminophenyl)diazenylbenzoate + 2 NADH + 2 H(+). Its function is as follows. Quinone reductase that provides resistance to thiol-specific stress caused by electrophilic quinones. In terms of biological role, also exhibits azoreductase activity. Catalyzes the reductive cleavage of the azo bond in aromatic azo compounds to the corresponding amines. The polypeptide is FMN-dependent NADH:quinone oxidoreductase (Laribacter hongkongensis (strain HLHK9)).